Reading from the N-terminus, the 258-residue chain is MDFLNAVILGIVEGLTEFLPVSSTGHMILSAKLLGLEQTSVLKCFEVVIQLGSILAVVFMFFDRLKEDFNLWIKLAIGFVPTAIIGFLAYKHIKTFFEPSTVAYMLIIGGIVFIVVELWHKKINYEGDTKTLHEVSFKQAFIIGLSQCFAMIPGTSRSGSTIITGLLCGLSREVAARFSFLLAIPTMFAATAYDSYKNADIFVQNKEALWIFLVGGFMAFIVALIVIKLFLKFVSKFSYISFGIYRIILGSIFLIYIL.

Helical transmembrane passes span 1-21 (MDFL…FLPV), 42-62 (LKCF…FMFF), 69-89 (FNLW…GFLA), 96-116 (FFEP…FIVV), 135-155 (VSFK…IPGT), 173-193 (EVAA…ATAY), 211-231 (IFLV…KLFL), and 237-257 (FSYI…LIYI).

It belongs to the UppP family.

It localises to the cell inner membrane. It catalyses the reaction di-trans,octa-cis-undecaprenyl diphosphate + H2O = di-trans,octa-cis-undecaprenyl phosphate + phosphate + H(+). Catalyzes the dephosphorylation of undecaprenyl diphosphate (UPP). Confers resistance to bacitracin. This is Undecaprenyl-diphosphatase from Campylobacter fetus subsp. fetus (strain 82-40).